Here is a 1002-residue protein sequence, read N- to C-terminus: MFWKWCFRLSIVFVGLWLLLDLSSRLGAEVFWFREVGYLQVFLLRLVSRGVLWVVAAGVTAVYLWGNLALAQRLKYPRSLKIAEVRREEAELSVGLKNFLSPQYSRLNAPKINDAGHLKPFRLRWLLPLAFVFSLLAGLILVHYGKIALAYWYPAFNKNSLPIITPFRLETIWELGRQVFSQVLYLGLIVGIAIAILIYSQFFLRAIAVVLSVVFGTILFYNWAKVLQYFFPTPFNSTEPLFGKDISFYIFSLPLWELLELWLMGMFLYGFIAVTLTYLLSADSLSQGIFPGFSPQQQRHLYGMGGLLMLMVAFSYWLSRYELVYSPRGVSYGASYTDVVVQLPIYNILCVLGLAIAFYLLWRTIFWRAKSQYRQFVFYGLGAYLFVVVAAGSVLPTIVQYLIVQPNELQREQTYIQRTIALTRQAFGLETIDARTFNPQGDLTTAAIQANDLTIRNIRLWDQRPLLETNRQLQQFRPYYRFPDADIDRYTLEAEAAANRPASANQSPAPAEIAATERRQVLIAARELDYSAVPEQAQTWINQHLIYTHGYGFTMSPVNTVGPGGLPEYFVKDIAGSNEGALSTSSEAVRDSIPIGQPRIYYGEITNTYVMTGTRVRELDYPSGSDNAYNSYSGLGGIVIGSGWRKGLFAMYLKDWQMLFTRDFLPETKVLFRRNVKSRIQAIAPFLKFDSDPYLVSADGSPAFSGRDNYLYWMVDAYTTSDRYPYSDPDNNGINYIRNSVKIVIDAYNGSVKFYIADPTDPIIATWSAIFPGMFQPLSDMPVTLRSHIRYPLDYFAIQSERLMTYHMTDTQVFYNREDQWQIPNEIYGSESRPVEPYYLITSLPTVPFEEFILLLPYTPKQRTNLIAWLAARSDGENYGKLLLYNFPKERLVYGTEQIEARINQDPVISQQISLWNRQGSRAIQGNLLVIPIEQSLLYVEPIYLEATQNSLPTLVRVVVAYENRIVMAQTLEQALQAIFQPEVTPAPAIIRPFEEGTTPDS.

The next 9 membrane-spanning stretches (helical) occupy residues 7–29, 49–71, 123–145, 178–200, 202–224, 258–280, 300–319, 339–361, and 382–404; these read FRLSIVFVGLWLLLDLSSRLGAE, RGVLWVVAAGVTAVYLWGNLALA, LRWLLPLAFVFSLLAGLILVHYG, QVFSQVLYLGLIVGIAIAILIYS, FFLRAIAVVLSVVFGTILFYNWA, LLELWLMGMFLYGFIAVTLTYLL, HLYGMGGLLMLMVAFSYWLS, VVVQLPIYNILCVLGLAIAFYLL, and GAYLFVVVAAGSVLPTIVQYLIV.

This sequence belongs to the UPF0182 family.

It localises to the cell membrane. This Nostoc sp. (strain PCC 7120 / SAG 25.82 / UTEX 2576) protein is UPF0182 protein alr1037.